A 206-amino-acid polypeptide reads, in one-letter code: Large ribosomal subunit protein uL4 (206 aa).

Residues 66–77 show a composition bias toward basic residues; sequence QKGTGRARHHSA. A disordered region spans residues 66-96; sequence QKGTGRARHHSARAPQFRGGGQAHGPVVRSH.

The protein belongs to the universal ribosomal protein uL4 family. Part of the 50S ribosomal subunit.

Functionally, one of the primary rRNA binding proteins, this protein initially binds near the 5'-end of the 23S rRNA. It is important during the early stages of 50S assembly. It makes multiple contacts with different domains of the 23S rRNA in the assembled 50S subunit and ribosome. Forms part of the polypeptide exit tunnel. The polypeptide is Large ribosomal subunit protein uL4 (Brucella anthropi (strain ATCC 49188 / DSM 6882 / CCUG 24695 / JCM 21032 / LMG 3331 / NBRC 15819 / NCTC 12168 / Alc 37) (Ochrobactrum anthropi)).